The sequence spans 432 residues: Adenylosuccinate synthetase (432 aa).

Residues 11–17 and 39–41 contribute to the GTP site; these read GDEGKGK and GHT. Residue Asp12 is the Proton acceptor of the active site. Positions 12 and 39 each coordinate Mg(2+). Residues 12–15, 37–40, Thr134, Arg148, Asn230, Thr245, and Arg309 contribute to the IMP site; these read DEGK and NAGH. The Proton donor role is filled by His40. 305–311 provides a ligand contact to substrate; sequence VTTGRKR. GTP is bound by residues Arg311, 337–339, and 419–421; these read KLD and GTG.

The protein belongs to the adenylosuccinate synthetase family. Homodimer. Mg(2+) is required as a cofactor.

It localises to the cytoplasm. It carries out the reaction IMP + L-aspartate + GTP = N(6)-(1,2-dicarboxyethyl)-AMP + GDP + phosphate + 2 H(+). It participates in purine metabolism; AMP biosynthesis via de novo pathway; AMP from IMP: step 1/2. Functionally, plays an important role in the de novo pathway and in the salvage pathway of purine nucleotide biosynthesis. Catalyzes the first committed step in the biosynthesis of AMP from IMP. The chain is Adenylosuccinate synthetase from Kluyveromyces lactis (strain ATCC 8585 / CBS 2359 / DSM 70799 / NBRC 1267 / NRRL Y-1140 / WM37) (Yeast).